The sequence spans 338 residues: Ketol-acid reductoisomerase (NADP(+)) (338 aa).

The KARI N-terminal Rossmann domain occupies 2–182; it reads TKMYYEKDTD…GGARAGVLET (181 aa). Residues 25-28, Ser51, Ser53, and 83-86 contribute to the NADP(+) site; these read YGSQ and DELQ. His108 is an active-site residue. Gly134 contacts NADP(+). The region spanning 183-330 is the KARI C-terminal knotted domain; it reads TFRTETETDL…SEIRKLYCWN (148 aa). Mg(2+)-binding residues include Asp191, Glu195, Glu227, and Glu231. A substrate-binding site is contributed by Ser252.

It belongs to the ketol-acid reductoisomerase family. Mg(2+) serves as cofactor.

The enzyme catalyses (2R)-2,3-dihydroxy-3-methylbutanoate + NADP(+) = (2S)-2-acetolactate + NADPH + H(+). It catalyses the reaction (2R,3R)-2,3-dihydroxy-3-methylpentanoate + NADP(+) = (S)-2-ethyl-2-hydroxy-3-oxobutanoate + NADPH + H(+). It participates in amino-acid biosynthesis; L-isoleucine biosynthesis; L-isoleucine from 2-oxobutanoate: step 2/4. The protein operates within amino-acid biosynthesis; L-valine biosynthesis; L-valine from pyruvate: step 2/4. Its function is as follows. Involved in the biosynthesis of branched-chain amino acids (BCAA). Catalyzes an alkyl-migration followed by a ketol-acid reduction of (S)-2-acetolactate (S2AL) to yield (R)-2,3-dihydroxy-isovalerate. In the isomerase reaction, S2AL is rearranged via a Mg-dependent methyl migration to produce 3-hydroxy-3-methyl-2-ketobutyrate (HMKB). In the reductase reaction, this 2-ketoacid undergoes a metal-dependent reduction by NADPH to yield (R)-2,3-dihydroxy-isovalerate. The protein is Ketol-acid reductoisomerase (NADP(+)) of Clostridium botulinum (strain Alaska E43 / Type E3).